Reading from the N-terminus, the 473-residue chain is Lactate utilization protein B (473 aa).

4Fe-4S ferredoxin-type domains follow at residues 302-332 (GSEF…GHSY) and 351-380 (YDDY…LHDL). Residues Cys-311, Cys-314, Cys-317, Cys-321, Cys-364, Cys-367, and Cys-371 each coordinate [4Fe-4S] cluster.

Belongs to the LutB/YkgF family.

In terms of biological role, is involved in L-lactate degradation and allows cells to grow with lactate as the sole carbon source. Has probably a role as an electron transporter during oxidation of L-lactate. This is Lactate utilization protein B from Bacillus anthracis (strain A0248).